Reading from the N-terminus, the 273-residue chain is 2,3,4,5-tetrahydropyridine-2,6-dicarboxylate N-succinyltransferase (273 aa).

R104 and D141 together coordinate substrate.

This sequence belongs to the transferase hexapeptide repeat family. As to quaternary structure, homotrimer.

The protein resides in the cytoplasm. The enzyme catalyses (S)-2,3,4,5-tetrahydrodipicolinate + succinyl-CoA + H2O = (S)-2-succinylamino-6-oxoheptanedioate + CoA. It functions in the pathway amino-acid biosynthesis; L-lysine biosynthesis via DAP pathway; LL-2,6-diaminopimelate from (S)-tetrahydrodipicolinate (succinylase route): step 1/3. The sequence is that of 2,3,4,5-tetrahydropyridine-2,6-dicarboxylate N-succinyltransferase from Nitrosomonas eutropha (strain DSM 101675 / C91 / Nm57).